The primary structure comprises 252 residues: 2-succinyl-6-hydroxy-2,4-cyclohexadiene-1-carboxylate synthase (252 aa).

Belongs to the AB hydrolase superfamily. MenH family. Monomer.

It carries out the reaction 5-enolpyruvoyl-6-hydroxy-2-succinyl-cyclohex-3-ene-1-carboxylate = (1R,6R)-6-hydroxy-2-succinyl-cyclohexa-2,4-diene-1-carboxylate + pyruvate. The protein operates within quinol/quinone metabolism; 1,4-dihydroxy-2-naphthoate biosynthesis; 1,4-dihydroxy-2-naphthoate from chorismate: step 3/7. It participates in quinol/quinone metabolism; menaquinone biosynthesis. Catalyzes a proton abstraction reaction that results in 2,5-elimination of pyruvate from 2-succinyl-5-enolpyruvyl-6-hydroxy-3-cyclohexene-1-carboxylate (SEPHCHC) and the formation of 2-succinyl-6-hydroxy-2,4-cyclohexadiene-1-carboxylate (SHCHC). The chain is 2-succinyl-6-hydroxy-2,4-cyclohexadiene-1-carboxylate synthase from Escherichia coli O9:H4 (strain HS).